We begin with the raw amino-acid sequence, 1032 residues long: MAETNNECSIKVLCRFRPLNQAEILRGDKFIPIFQGDDSVVIGGKPYVFDRVFPPNTTQEQVYHACAMQIVKDVLAGYNGTIFAYGQTSSGKTHTMEGKLHDPQLMGIIPRIARDIFNHIYSMDENLEFHIKVSYFEIYLDKIRDLLDVTKTNLSVHEDKNRVPFVKGCTERFVSSPEEILDVIDEGKSNRHVAVTNMNEHSSRSHSIFLINIKQENMETEQKLSGKLYLVDLAGSEKVSKTGAEGAVLDEAKNINKSLSALGNVISALAEGTKSYVPYRDSKMTRILQDSLGGNCRTTMFICCSPSSYNDAETKSTLMFGQRAKTIKNTASVNLELTAEQWKKKYEKEKEKTKAQKETIAKLEAELSRWRNGENVPETERLAGEEAALGAELCEETPVNDNSSIVVRIAPEERQKYEEEIRRLYKQLDDKDDEINQQSQLIEKLKQQMLDQEELLVSTRGDNEKVQRELSHLQSENDAAKDEVKEVLQALEELAVNYDQKSQEVEEKSQQNQLLVDELSQKVATMLSLESELQRLQEVSGHQRKRIAEVLNGLMKDLSEFSVIVGNGEIKLPVEISGAIEEEFTVARLYISKIKSEVKSVVKRCRQLENLQVECHRKMEVTGRELSSCQLLISQHEAKIRSLTEYMQSVELKKRHLEESYDSLSDELAKLQAQETVHEVALKDKEPDTQDADEVKKALELQMESHREAHHRQLARLRDEINEKQKTIDELKDLNQKLQLELEKLQADYEKLKSEEHEKSTKLQELTFLYERHEQSKQDLKGLEETVARELQTLHNLRKLFVQDVTTRVKKSAEMEPEDSGGIHSQKQKISFLENNLEQLTKVHKQLVRDNADLRCELPKLEKRLRATAERVKALEGALKEAKEGAMKDKRRYQQEVDRIKEAVRYKSSGKRGHSAQIAKPVRPGHYPASSPTNPYGTRSPECISYTNSLFQNYQNLYLQATPSSTSDMYFANSCTSSGATSSGGPLASYQKANMDNGNATDINDNRSDLPCGYEAEDQAKLFPLHQETAAS.

Position 2 is an N-acetylalanine (Ala-2). In terms of domain architecture, Kinesin motor spans Ser-9–Ile-327. Residue Gly-86–Thr-93 participates in ATP binding. Residues Val-174–Lys-315 form a microtubule-binding region. The tract at residues Glu-271 to Ala-361 is necessary for interaction with ZFYVE27. Residues Ala-331–Tyr-906 are a coiled coil. Residues Thr-353 to Ser-1032 form an interaction with BICD2 region. A Phosphothreonine modification is found at Thr-397. Disordered stretches follow at residues Tyr-906–Arg-939 and Ser-978–Leu-1010. Residues Lys-907 to Ser-1032 are globular. Low complexity predominate over residues Ser-978 to Ser-989. Polar residues predominate over residues Gln-991–Ile-1003.

This sequence belongs to the TRAFAC class myosin-kinesin ATPase superfamily. Kinesin family. Kinesin subfamily. As to quaternary structure, oligomer composed of two heavy chains and two light chains. Interacts with GRIP1. Interacts with FMR1 (via C-terminus); this interaction is increased in a mGluR-dependent manner. Interacts with ZFYVE27. Interacts with VAPA, VAPB, SURF4, RAB11A (GDP-bound form), RAB11B (GDP-bound form) and RTN3 in a ZFYVE27-dependent manner. Interacts with BORCS5. Interacts with BICD2. Interacts with DTNB. In terms of tissue distribution, distributed throughout the CNS but is highly enriched in subsets of neurons.

It localises to the cytoplasm. The protein resides in the perinuclear region. Its subcellular location is the cytoskeleton. It is found in the perikaryon. The enzyme catalyses ATP + H2O + a kinesin associated with a microtubule at position (n) = ADP + phosphate a kinesin associated with a microtubule at position (n+1, toward the plus end).. Functionally, microtubule-dependent motor required for slow axonal transport of neurofilament proteins (NFH, NFM and NFL). Can induce formation of neurite-like membrane protrusions in non-neuronal cells in a ZFYVE27-dependent manner. The ZFYVE27-KIF5A complex contributes to the vesicular transport of VAPA, VAPB, SURF4, RAB11A, RAB11B and RTN3 proteins in neurons. Required for anterograde axonal transportation of MAPK8IP3/JIP3 which is essential for MAPK8IP3/JIP3 function in axon elongation. The protein is Kinesin heavy chain isoform 5A of Homo sapiens (Human).